The sequence spans 329 residues: Pantothenate kinase (329 aa).

A disordered region spans residues 1 to 21 (MISPVPSIPRSAHRQRPEATP). ATP is bound at residue 107–114 (GSVAVGKS).

This sequence belongs to the prokaryotic pantothenate kinase family.

Its subcellular location is the cytoplasm. The catalysed reaction is (R)-pantothenate + ATP = (R)-4'-phosphopantothenate + ADP + H(+). The protein operates within cofactor biosynthesis; coenzyme A biosynthesis; CoA from (R)-pantothenate: step 1/5. This Streptomyces coelicolor (strain ATCC BAA-471 / A3(2) / M145) protein is Pantothenate kinase (coaA).